Here is a 1205-residue protein sequence, read N- to C-terminus: Solute carrier family 12 member 2 (1205 aa).

The residue at position 1 (Met1) is an N-acetylmethionine. Positions 1–22 (MEPGPARPRLAPAARPGWGRAA) are enriched in low complexity. The disordered stretch occupies residues 1–102 (MEPGPARPRL…AAAAAAAAAA (102 aa)). Residues 1–279 (MEPGPARPRL…AESKGVVKFG (279 aa)) are Cytoplasmic-facing. Basic residues predominate over residues 23–35 (GCRRRGGPARHGR). Residues Ser74 and Ser76 each carry the phosphoserine modification. An RFXV motif 1 motif is present at residues 77–80 (RFQV). Residues 87-102 (AGRAAAAAAAAAAAAA) are compositionally biased toward low complexity. An RFXV motif 2 motif is present at residues 133-136 (RFRV). Positions 143-155 (ASSSADDSLSDAA) are enriched in low complexity. Residues 143–187 (ASSSADDSLSDAAGVGGDGPNVSFQNGGDTVLSEGSSLHSGGGSG) are disordered. Residues Thr196, Thr200, Thr205, Thr210, and Thr223 each carry the phosphothreonine modification. The residue at position 235 (Ser235) is a Phosphoserine. Thr259 is subject to Phosphothreonine. The chain crosses the membrane as a discontinuously helical span at residues 280 to 309 (WIKGVLVRCMLNIWGVMLFIRLSWIVGQAG). Leu290 provides a ligand contact to Na(+). Positions 291 and 292 each coordinate K(+). Trp293 contacts Na(+). Gly294, Val295, and Met296 together coordinate chloride. A helical membrane pass occupies residues 310–329 (IGLSVVVIAMATVVTTITGL). At 330-360 (STSAIATNGFVRGGGAYYLISRSLGPEFGGA) the chain is on the cytoplasmic side. The helical transmembrane segment at 361 to 388 (IGLIFAFANAVAVAMYVVGFAETVVELL) threads the bilayer. Residue Phe365 coordinates chloride. Tyr376 is a K(+) binding site. Residues 389–398 (KEHSILMIDE) lie on the Extracellular side of the membrane. A helical membrane pass occupies residues 399–422 (INDIRIIGAITVVILLGISVAGME). The Cytoplasmic segment spans residues 423 to 425 (WEA). Residues 426–447 (KAQIVLLVILLLAIADFVIGTF) traverse the membrane as a helical segment. At 448–479 (ISLESKKPKGFFGYKSEIFNENFGPDFREEET) the chain is on the extracellular side. Residues 480–497 (FFSVFAIFFPAATGILAG) traverse the membrane as a discontinuously helical segment. K(+) is bound by residues Pro489, Ala490, and Thr492. Pro489 and Ala490 together coordinate chloride. Residues Gly493 and Ile494 each coordinate chloride. Topologically, residues 498 to 512 (ANISGDLADPQSAIP) are cytoplasmic. The helical transmembrane segment at 513–534 (KGTLLAILITTVVYIGIAVSVG) threads the bilayer. Residues 535–591 (SCVVRDATGNVNDTITTELTNCTSAACKLNFDFSYCESNTCSYGLMNNFQVMSMVSG) are Extracellular-facing. N-linked (GlcNAc...) asparagine glycosylation is found at Asn546 and Asn555. 2 cysteine pairs are disulfide-bonded: Cys556-Cys561 and Cys570-Cys575. The chain crosses the membrane as a helical span at residues 592 to 616 (FAPLISAGIFSATLSSALASLVSAP). Na(+) is bound by residues Ala603, Ser606, and Ser607. Residues 617–644 (KIFQALCKDNIYPAFQMFAKGYGKNNEP) lie on the Cytoplasmic side of the membrane. A run of 2 helical transmembrane segments spans residues 645–665 (LRGYILTFLIALGFILIAELN) and 666–684 (VIAPIISNFFLASYALINF). Phe675 and Tyr679 together coordinate chloride. The Cytoplasmic portion of the chain corresponds to 685 to 707 (SVFHASLAKSPGWRPAFKYYNMW). Helical transmembrane passes span 708–725 (ISLIGAILCCIVMFVINW) and 726–738 (WAALLTYVIVLGL). The Cytoplasmic portion of the chain corresponds to 739-1205 (YIYVTYKKPD…NHQSVLTFYS (467 aa)). The segment at 754-771 (STQALTYLSALQHSIRLS) is scissor helix. Ser933 and Ser937 each carry phosphoserine. The interval 953–986 (SDQDTCKSSGEKSITQKDEEEDGKTPTQPLLKKE) is disordered. A Phosphoserine modification is found at Ser987.

The protein belongs to the SLC12A transporter family. Homodimer; adopts a domain-swap conformation at the scissor helices connecting the transmembrane domain and C-terminal domain. Post-translationally, phosphorylated at Thr-196, Thr-200 and Thr-205 by OXSR1/OSR1 and STK39/SPAK downstream of WNK kinases (WNK1, WNK2, WNK3 or WNK4), promoting its activity. As to expression, widely expressed. High expression found in the cochlea, cochlear lateral wall, and the choroid plexus. Lower expression found in the cerebellum and the cortex.

It is found in the basolateral cell membrane. The catalysed reaction is K(+)(out) + 2 chloride(out) + Na(+)(out) = K(+)(in) + 2 chloride(in) + Na(+)(in). Activated following phosphorylation by OXSR1/OSR1 and STK39/SPAK downstream of WNK kinases (WNK1, WNK2, WNK3 or WNK4). Inhibited by bumetanide and furosemide. Its function is as follows. Cation-chloride cotransporter which mediates the electroneutral transport of chloride, potassium and/or sodium ions across the membrane. Plays a vital role in the regulation of ionic balance and cell volume. The protein is Solute carrier family 12 member 2 (Slc12a2) of Mus musculus (Mouse).